The primary structure comprises 489 residues: Rhamnulokinase (489 aa).

13-17 provides a ligand contact to ATP; that stretch reads ASSGR. C68 and C222 are joined by a disulfide. Residues G83 and 236 to 238 each bind substrate; that span reads HDT. D237 (proton acceptor) is an active-site residue. T259 provides a ligand contact to ATP. Residue N296 coordinates substrate. Q304 contacts ATP. C353 and C370 form a disulfide bridge. Residue G402 participates in ATP binding. A disulfide bridge connects residues C413 and C417.

Belongs to the rhamnulokinase family. As to quaternary structure, monomer. The cofactor is Mg(2+).

It catalyses the reaction L-rhamnulose + ATP = L-rhamnulose 1-phosphate + ADP + H(+). The protein operates within carbohydrate degradation; L-rhamnose degradation; glycerone phosphate from L-rhamnose: step 2/3. Functionally, involved in the catabolism of L-rhamnose (6-deoxy-L-mannose). Catalyzes the transfer of the gamma-phosphate group from ATP to the 1-hydroxyl group of L-rhamnulose to yield L-rhamnulose 1-phosphate. This is Rhamnulokinase from Escherichia coli O127:H6 (strain E2348/69 / EPEC).